Consider the following 1203-residue polypeptide: MHVKSIIIDGFKSYAQRTEINGFDPLFNAITGLNGSGKSNILDSICFLLGISNLTQVRASNLQDLVYKNGQAGITKATVSITFDNYDKKQSPLGFEAHDEITVTRQVVIGGRNKYLINGVNANNTRVQDLFCSVGLNVNNPHFLIMQGRITKVLNMKPPEILAMIEEAAGTRMYECKKIAAQKTIEKKEAKLKEIQTILEEEITPTIHKLKEERSSYLEYQKIMREIEHLSRLYVAYQFVCAEETKVRSAEELKEMQDSILKLQDTMAENERKVKELGKEIAELEKMRDQEVGGALRSLEEALSEAQRADTKVQSALDLKKQNMKAEREKKRKELVKSMEEDAKVLTAKEKEVKKITDGLSSLQEASQKDVEAFTSAQQHFNAVSAGLSSNEDGEEATLAGQMMACKNETSKAETEAKQAQMKLKHAQQELKTKQAEVKKMDGGYKKDNEAFEAVKKSKEKLEVEMKKLNYEDGREEQLLEKRRGLSRDVNRLREAYESLMARFPNLQFEYKDPEKNWDSDRVKGLVASLISIKDVSTATALEVVAGGRLYNVVVDTEVTGKKLLEKGELKRRFTIIPLNKISARCLGKDTVNVAKNLVGADNVNLALSLVGYESELQKAMEYVFGTTLVCDTMDNAKKVTFDKRIMTKTVTLGGDTFDPQGTLSGGARSQNASVLVRLQELKDVQDELKAKETELQEVEKELMTLKNTVERYRQLKQQWEMKSEEAELLQTKLQQSSYHKQQEELDSLKQTIEESEETLKNTKEVQKKAEEKFKVLEHKMKNAEAERERELKEAQQKLDTAKKKADASNKKMKEKQQEVDALVLELEELKREQTTYKQQIETVDEAMKAYQEQADSMASEVSKNKEAVKKAQDELAKQKEIIMGHDKEIKTKSSEAGKLRENNNDLQLKIKELEHNISKHKKDSADAAAKVAKMLNDYEWIASEKHLFGQANTAYDFKTNNPKEAGQRLHKLQEKKEKLGRNVNMRAMNMLTQAEERYNDLMKRKRIVENDKSKILTTIEELDQKKNEALNIAWQKVNKDFGSIFSTLLPGANAMLAPPEGQSVLDGLEFKVALGNTWKENLTELSGGQRSLVALSLILAMLLFKPAPIYILDEVDAALDLSHTQNIGQMLRTHFRHSQFIVVSLKDGMFNNANVLFKTKFVDGVSTVARFAQNQNGGSSAGQQRSDKSKTKERRNRMEVDK.

Position 32–39 (32–39) interacts with ATP; that stretch reads GLNGSGKS. A coiled-coil region spans residues 172-513; the sequence is RMYECKKIAA…FPNLQFEYKD (342 aa). An SMC hinge domain is found at 522 to 640; sequence RVKGLVASLI…CDTMDNAKKV (119 aa). A coiled-coil region spans residues 670 to 1032; that stretch reads SQNASVLVRL…LDQKKNEALN (363 aa). Positions 1174–1185 are enriched in low complexity; the sequence is QNQNGGSSAGQQ. The segment at 1174-1203 is disordered; the sequence is QNQNGGSSAGQQRSDKSKTKERRNRMEVDK. The segment covering 1186-1203 has biased composition (basic and acidic residues); that stretch reads RSDKSKTKERRNRMEVDK.

It belongs to the SMC family. SMC2 subfamily. As to quaternary structure, forms a heterodimer with XCAP-C/SMC4. Component of the condensin complex, which contains the XCAP-E/SMC2 and XCAP-C/SMC4 heterodimer, and three non SMC subunits that probably regulate the complex: XCAP-H/BRRN1, XCAP-D2/CNAP1 and XCAP-G/CAPG.

The protein resides in the nucleus. It localises to the cytoplasm. The protein localises to the chromosome. In terms of biological role, central component of the condensin complex, a complex required for conversion of interphase chromatin into mitotic-like condense chromosomes. The condensin complex probably introduces positive supercoils into relaxed DNA in the presence of type I topoisomerases and converts nicked DNA into positive knotted forms in the presence of type II topoisomerases. In Xenopus laevis (African clawed frog), this protein is Structural maintenance of chromosomes protein 2 (smc2).